A 392-amino-acid polypeptide reads, in one-letter code: MASVEEFRNAQRAKGPATILAIGTATPDHCVYQSDYADYYFRVTKSEHMTELKKKFNRICDKSMIKKRYIHLTEEMLEEHPNIGAYMAPSLNIRQEIITAEVPRLGRDAALKALKEWGQPKSKITHLVFCTTSGVEMPGADYKLANLLGLETSVRRVMLYHQGCYAGGTVLRTAKDLAENNAGARVLVVCSEITVVTFRGPSEDALDSLVGQALFGDGSSAVIVGSDPDVSIERPLFQLVSAAQTFIPNSAGAIAGNLREVGLTFHLWPNVPTLISENIEKCLTQAFDPLGISDWNSLFWIAHPGGPAILDAVEAKLNLEKKKLEATRHVLSEYGNMSSACVLFILDEMRKKSLKGENATTGEGLDWGVLFGFGPGLTIETVVLHSIPTVTN.

Residue 55-58 (KFNR) participates in substrate binding. C164 is a catalytic residue. Substrate contacts are provided by residues L267 and 305–307 (GGP).

This sequence belongs to the thiolase-like superfamily. Chalcone/stilbene synthases family. Homodimer.

It is found in the cytoplasm. The catalysed reaction is 4-coumaroyl-CoA + 3 malonyl-CoA + 3 H(+) = trans-resveratrol + 4 CO2 + 4 CoA. The protein operates within phytoalexin biosynthesis; 3,4',5-trihydroxystilbene biosynthesis; 3,4',5-trihydroxystilbene from trans-4-coumarate: step 2/2. Its function is as follows. Mediates resistance to pathogens which are sensitive to stilbenes. This Vitis vinifera (Grape) protein is Stilbene synthase 6 (STS).